The sequence spans 370 residues: DNA replication and repair protein RecF (370 aa).

33–40 (GPNAAGKT) contacts ATP.

The protein belongs to the RecF family.

The protein resides in the cytoplasm. In terms of biological role, the RecF protein is involved in DNA metabolism; it is required for DNA replication and normal SOS inducibility. RecF binds preferentially to single-stranded, linear DNA. It also seems to bind ATP. This Moorella thermoacetica (strain ATCC 39073 / JCM 9320) protein is DNA replication and repair protein RecF.